A 1271-amino-acid chain; its full sequence is Probable WRKY transcription factor protein 1 (1271 aa).

Positions M1–Y12 are enriched in polar residues. Disordered regions lie at residues M1–R138, N204–G312, and N370–S515. Residues L9–N71 are a coiled coil. Low complexity-rich tracts occupy residues N13–N103, I116–N135, N204–N216, and S223–N259. The span at N260–E274 shows a compositional bias: acidic residues. Residues S297–G312 are compositionally biased toward polar residues. Residues K320–N372 adopt a coiled-coil conformation. The span at N370–T388 shows a compositional bias: low complexity. Over residues N413–F442 the composition is skewed to acidic residues. Over residues E443 to K458 the composition is skewed to low complexity. Residues E475–N487 are compositionally biased toward basic and acidic residues. A compositionally biased stretch (polar residues) spans Q488–S515. Residues L520–E574 adopt a coiled-coil conformation. Residues N578–P587 show a composition bias toward basic and acidic residues. Disordered regions lie at residues N578–L650 and S667–N811. Over residues N610–N642 the composition is skewed to low complexity. The span at N672–A702 shows a compositional bias: polar residues. Composition is skewed to low complexity over residues T703–P715, N725–N766, and N774–N811. Positions N766 to N786 form a coiled coil. The segment at residues N808–P872 is a DNA-binding region (WRKY 1). Zn(2+) contacts are provided by C839, C844, H867, and H869. Residues F890–G1095 form a disordered region. Residues G895–G918 are compositionally biased toward low complexity. Residues N919–N937 are compositionally biased toward gly residues. Residues S938–S956 are compositionally biased toward low complexity. Positions P957–M966 are enriched in polar residues. Positions N967 to K995 are enriched in low complexity. Residues S998 to T1010 show a composition bias toward basic and acidic residues. Residues T1011–D1021 are compositionally biased toward acidic residues. Residues D1013 to N1040 are a coiled coil. Over residues N1025–N1085 the composition is skewed to low complexity. Positions S1105–P1167 form a DNA-binding region, WRKY 2. Zn(2+) contacts are provided by C1136, C1141, H1162, and H1164. The interval N1180–N1210 is disordered. Over residues N1184–N1210 the composition is skewed to low complexity.

Belongs to the WRKY group I family.

Its subcellular location is the nucleus. Its function is as follows. Probable transcription factor. Interacts specifically with the W box (5'-(T)TGAC[CT]-3'), a frequently occurring elicitor-responsive cis-acting element. This is Probable WRKY transcription factor protein 1 (wrky1) from Dictyostelium discoideum (Social amoeba).